The chain runs to 1637 residues: Glutamate rich 3 (1637 aa).

Disordered stretches follow at residues 145 to 192, 408 to 453, 478 to 814, 1111 to 1194, 1238 to 1445, and 1457 to 1637; these read PLTL…GSLL, PSST…KESC, EWKG…QDAG, VGTS…SPRE, IEKV…SGER, and KAEN…RETA. Residues 169 to 185 show a composition bias toward polar residues; the sequence is LLSSRQTRNGSKITSGS. Basic and acidic residues-rich tracts occupy residues 416–426, 443–452, and 478–487; these read EKITEKKEEPP, KRNEMERKES, and EWKGKSGRDV. Over residues 500–523 the composition is skewed to acidic residues; it reads YEEDFEVDDEKQDEKVDEDEDQAD. A compositionally biased stretch (basic and acidic residues) spans 534–557; the sequence is TESEKDNRNPEKKIETSSEKAHDS. The span at 558–572 shows a compositional bias: acidic residues; sequence ENEDTGCSDSEEDDR. 2 stretches are compositionally biased toward low complexity: residues 579 to 590 and 608 to 617; these read SSISSRSHPYSS and EEGSSRSSSS. 8 stretches are compositionally biased toward basic and acidic residues: residues 619-638, 677-693, 769-802, 1115-1130, 1264-1307, 1319-1329, 1342-1357, and 1402-1412; these read DLRENDDPGKPHFPIEKYLE, ESEHKEPRRVASSEVRA, QEMHTLKEEAMKKDESSQPEDTDAHAGVREESGM, EVKEAEREVGSPKTDG, LKTE…KDVE, KLLEDPPKERA, SPKESEATATEHKGGE, and RCEEWAAKELD. Positions 1476-1487 are enriched in polar residues; that stretch reads VTGSLTGQNWNM. Composition is skewed to basic and acidic residues over residues 1550–1568, 1589–1599, and 1614–1637; these read AEERTGTEDMAPRTEKVAV, AQDREGGETKA, and GKDEEHQSGAAEEFRESVSQRETA.

The protein resides in the cell projection. Its subcellular location is the cilium. The protein localises to the cytoplasm. Functionally, component of the primary cilium that controls cilium formation and length. May function within retrograde intraflagellar transport (IFT)-associated pathways to remove signaling proteins from primary cilia. Also involved in neuronal vesicle biogenesis and neurotransmitter vesicular function. This Mus musculus (Mouse) protein is Glutamate rich 3.